A 324-amino-acid polypeptide reads, in one-letter code: MAFRLKLCPEKTNIDFFWAAPVTFGFSVFLMAASLVAWLTLGLNFGIDFRGGTTIRTESTQAVDVAAYRAALEGQDLGDISITEVFDPGFRADQHVAMVRIGAQDATQSITPEQIGQVEEALKTVDPSITFPSVESVGPKVSGELIRSAILAVAAACAGIAVYIWLRFEWQFALGSVAALIHDVLVTIGVFALFQIKFDLTTVAALLTVLGYSINDTVVVFDRLRENLVKYKTMPLRDVMNLSVNETLSRTIMTLMTTLIALVSLLVFGGDVIRGFVFAITFGVVIGTYSSVYMAKNIVLYLGVDRGGPKKDSKAGTQFANIDA.

6 consecutive transmembrane segments (helical) span residues 16–36 (FFWA…ASLV), 145–165 (LIRS…VYIW), 174–194 (LGSV…FALF), 201–221 (TTVA…VVVF), 247–269 (TLSR…LVFG), and 276–295 (FVFA…VYMA).

The protein belongs to the SecD/SecF family. SecF subfamily. As to quaternary structure, forms a complex with SecD. Part of the essential Sec protein translocation apparatus which comprises SecA, SecYEG and auxiliary proteins SecDF-YajC and YidC.

The protein resides in the cell inner membrane. In terms of biological role, part of the Sec protein translocase complex. Interacts with the SecYEG preprotein conducting channel. SecDF uses the proton motive force (PMF) to complete protein translocation after the ATP-dependent function of SecA. The polypeptide is Protein translocase subunit SecF (Cereibacter sphaeroides (strain ATCC 17023 / DSM 158 / JCM 6121 / CCUG 31486 / LMG 2827 / NBRC 12203 / NCIMB 8253 / ATH 2.4.1.) (Rhodobacter sphaeroides)).